The primary structure comprises 164 residues: UPF0303 protein RHECIAT_CH0003058 (164 aa).

This sequence belongs to the UPF0303 family.

In Rhizobium etli (strain CIAT 652), this protein is UPF0303 protein RHECIAT_CH0003058.